We begin with the raw amino-acid sequence, 72 residues long: Rubredoxin (72 aa).

Residues 19 to 72 enclose the Rubredoxin-like domain; sequence DAVLECKICWQRYDPAEGDPVWQIPPGTPFAALPAHWRCPRCDGDREQFMVVDG. Cys24, Cys27, Cys57, and Cys60 together coordinate Fe cation.

This sequence belongs to the rubredoxin family. Requires Fe(3+) as cofactor.

Its function is as follows. Rubredoxin is a small nonheme, iron protein lacking acid-labile sulfide. Its single Fe, chelated to 4 Cys, functions as an electron acceptor and may also stabilize the conformation of the molecule. Could be involved in hydrogenase-linked redox processes. This chain is Rubredoxin (hoxR), found in Azotobacter vinelandii.